A 128-amino-acid chain; its full sequence is MRHRKSGRQLNRNSSHRQAMFRNMAGSLVRHEIIKTTLPKAKELRRVVEPLITLAKTDSVANRRLAFARTRDNEVVAKLFTVLGPRFASRAGGYTRILKCGFRAGDNAPMAYIELVDRADSETEAAAE.

Belongs to the bacterial ribosomal protein bL17 family. In terms of assembly, part of the 50S ribosomal subunit. Contacts protein L32.

This Proteus mirabilis (strain HI4320) protein is Large ribosomal subunit protein bL17.